The following is a 525-amino-acid chain: GMP synthase [glutamine-hydrolyzing] (525 aa).

The Glutamine amidotransferase type-1 domain maps to 9–207 (RILILDFGSQ…VMDICKCEKL (199 aa)). Residue Cys86 is the Nucleophile of the active site. Residues His181 and Glu183 contribute to the active site. Positions 208–400 (WTAGAIIEDA…LGLPYDMLYR (193 aa)) constitute a GMPS ATP-PPase domain. An ATP-binding site is contributed by 235-241 (SGGVDSS).

Homodimer.

It catalyses the reaction XMP + L-glutamine + ATP + H2O = GMP + L-glutamate + AMP + diphosphate + 2 H(+). It functions in the pathway purine metabolism; GMP biosynthesis; GMP from XMP (L-Gln route): step 1/1. Functionally, catalyzes the synthesis of GMP from XMP. The sequence is that of GMP synthase [glutamine-hydrolyzing] from Alteromonas mediterranea (strain DSM 17117 / CIP 110805 / LMG 28347 / Deep ecotype).